A 171-amino-acid polypeptide reads, in one-letter code: tRNA-splicing endonuclease subunit Sen15 (171 aa).

The segment at 1–35 is disordered; it reads MEERGDSEPTPGCSGLGPGGVRGFGDGGGAPSWAP. At S7 the chain carries Phosphoserine. Gly residues predominate over residues 14 to 30; the sequence is SGLGPGGVRGFGDGGGA. At S168 the chain carries Phosphoserine.

It belongs to the SEN15 family. In terms of assembly, homodimer. tRNA splicing endonuclease is a heterotetramer composed of TSEN2, TSEN15, TSEN34/LENG5 and TSEN54. tRNA splicing endonuclease complex also contains proteins of the Pre-mRNA 3' end processing machinery, such as CLP1, CPSF1, CPSF4 and CSTF2. Widely expressed. Highly expressed in testis and uterus.

The protein resides in the nucleus. The protein localises to the nucleolus. Its function is as follows. Non-catalytic subunit of the tRNA-splicing endonuclease complex, a complex responsible for identification and cleavage of the splice sites in pre-tRNA. It cleaves pre-tRNA at the 5' and 3' splice sites to release the intron. The products are an intron and two tRNA half-molecules bearing 2',3' cyclic phosphate and 5'-OH termini. There are no conserved sequences at the splice sites, but the intron is invariably located at the same site in the gene, placing the splice sites an invariant distance from the constant structural features of the tRNA body. The tRNA splicing endonuclease is also involved in mRNA processing via its association with pre-mRNA 3'-end processing factors, establishing a link between pre-tRNA splicing and pre-mRNA 3'-end formation, suggesting that the endonuclease subunits function in multiple RNA-processing events. This Homo sapiens (Human) protein is tRNA-splicing endonuclease subunit Sen15 (TSEN15).